The sequence spans 271 residues: Putative phosphoenolpyruvate synthase regulatory protein (271 aa).

Gly-152–Thr-159 is an ADP binding site.

This sequence belongs to the pyruvate, phosphate/water dikinase regulatory protein family. PSRP subfamily.

The catalysed reaction is [pyruvate, water dikinase] + ADP = [pyruvate, water dikinase]-phosphate + AMP + H(+). It carries out the reaction [pyruvate, water dikinase]-phosphate + phosphate + H(+) = [pyruvate, water dikinase] + diphosphate. Its function is as follows. Bifunctional serine/threonine kinase and phosphorylase involved in the regulation of the phosphoenolpyruvate synthase (PEPS) by catalyzing its phosphorylation/dephosphorylation. This is Putative phosphoenolpyruvate synthase regulatory protein from Marinobacter nauticus (strain ATCC 700491 / DSM 11845 / VT8) (Marinobacter aquaeolei).